Consider the following 660-residue polypeptide: Protein translocase subunit SecA 2 (660 aa).

ATP is bound by residues Gln-113, 131–135, and Asp-539; that span reads GEGKT.

It belongs to the SecA family. As to quaternary structure, monomer and homodimer. Part of the essential Sec protein translocation apparatus which comprises SecA, SecYEG and auxiliary proteins SecDF-YajC and YidC.

The protein resides in the cell inner membrane. The protein localises to the cytoplasm. It carries out the reaction ATP + H2O + cellular proteinSide 1 = ADP + phosphate + cellular proteinSide 2.. In terms of biological role, part of the Sec protein translocase complex. Interacts with the SecYEG preprotein conducting channel. Has a central role in coupling the hydrolysis of ATP to the transfer of proteins into and across the cell membrane, serving both as a receptor for the preprotein-SecB complex and as an ATP-driven molecular motor driving the stepwise translocation of polypeptide chains across the membrane. This Bordetella avium (strain 197N) protein is Protein translocase subunit SecA 2.